The chain runs to 224 residues: Deoxyribose-phosphate aldolase (224 aa).

The Proton donor/acceptor role is filled by aspartate 94. Lysine 156 serves as the catalytic Schiff-base intermediate with acetaldehyde. Catalysis depends on lysine 184, which acts as the Proton donor/acceptor.

It belongs to the DeoC/FbaB aldolase family. DeoC type 1 subfamily.

It is found in the cytoplasm. The enzyme catalyses 2-deoxy-D-ribose 5-phosphate = D-glyceraldehyde 3-phosphate + acetaldehyde. It functions in the pathway carbohydrate degradation; 2-deoxy-D-ribose 1-phosphate degradation; D-glyceraldehyde 3-phosphate and acetaldehyde from 2-deoxy-alpha-D-ribose 1-phosphate: step 2/2. In terms of biological role, catalyzes a reversible aldol reaction between acetaldehyde and D-glyceraldehyde 3-phosphate to generate 2-deoxy-D-ribose 5-phosphate. This is Deoxyribose-phosphate aldolase from Methanocella arvoryzae (strain DSM 22066 / NBRC 105507 / MRE50).